The sequence spans 91 residues: Small ribosomal subunit protein uS19 (91 aa).

The protein belongs to the universal ribosomal protein uS19 family.

In terms of biological role, protein S19 forms a complex with S13 that binds strongly to the 16S ribosomal RNA. The polypeptide is Small ribosomal subunit protein uS19 (Pseudomonas syringae pv. syringae (strain B728a)).